Reading from the N-terminus, the 652-residue chain is Regulator of DNA class I crossover intermediates 1 (652 aa).

The binds DNA containing a D-loop DNA-binding region spans 1–231 (MNWVGGSRSR…TLFERLNSLG (231 aa)). Disordered stretches follow at residues 363–434 (NKTS…NIPS) and 469–506 (KISL…EDQI). The segment covering 377–388 (YQREYNKNERND) has biased composition (basic and acidic residues). The span at 389–401 (LSTSFENDYYPSS) shows a compositional bias: polar residues. Positions 402-417 (SERKEKFENDYQEKTP) are enriched in basic and acidic residues. Over residues 473 to 498 (DSAQSSRSTSYSPRPTDSCFSSSSDL) the composition is skewed to low complexity.

As to quaternary structure, interacts with MSH5. Interacts with TEX11.

Its subcellular location is the chromosome. Involved in recombination, probably acting by stabilizing recombination intermediates during meiotic crossover formation. Required for normal germline development and fertility. Required for meiotic progression, complete chromosomal synapsis and crossover formation. Binds double-stranded DNA. However, also binds branched DNA molecules, such as those containing a D-loop or Holliday junction structure. Probably not required for formation of DNA double-strand breaks (DSBs). Also binds RNA in an RNA structure-independent manner, with a preference for binding 3'-UTR regions of mRNAs; may stabilize bound RNAs. The chain is Regulator of DNA class I crossover intermediates 1 from Homo sapiens (Human).